The following is a 245-amino-acid chain: MKKIDLNADIAEGFPFDESLLQLLSSANIACGLHAGGAKEMQSAVKFAKENKVRIGAHPSFPDRENFGRTAMALSSQELIAHLRYQLGALKAICDGEGAVISYVKPHGALYNQAAKDEKIARVIAQTVYQFDPHLKLMGLAGSLMLCIAEEEKLQTISEVFADRHYMPDGSLVPRSQPNAMVESDKEAIQQVLQMVTKGQVNAIDGSLVPVKAESICLHGDNQHSLQFAKRIVEELEKNHIKITA.

This sequence belongs to the LamB/PxpA family. As to quaternary structure, forms a complex composed of PxpA, PxpB and PxpC.

The catalysed reaction is 5-oxo-L-proline + ATP + 2 H2O = L-glutamate + ADP + phosphate + H(+). Its function is as follows. Catalyzes the cleavage of 5-oxoproline to form L-glutamate coupled to the hydrolysis of ATP to ADP and inorganic phosphate. The sequence is that of 5-oxoprolinase subunit A from Haemophilus influenzae (strain PittGG).